Consider the following 340-residue polypeptide: Methionine import ATP-binding protein MetN (340 aa).

The 239-residue stretch at 5-243 (IEFRGVTKSF…PQTTTARRFV (239 aa)) folds into the ABC transporter domain. Residue 40–47 (GYSGAGKS) coordinates ATP.

It belongs to the ABC transporter superfamily. Methionine importer (TC 3.A.1.24) family. The complex is composed of two ATP-binding proteins (MetN), two transmembrane proteins (MetI) and a solute-binding protein (MetQ).

It is found in the cell membrane. The catalysed reaction is L-methionine(out) + ATP + H2O = L-methionine(in) + ADP + phosphate + H(+). It carries out the reaction D-methionine(out) + ATP + H2O = D-methionine(in) + ADP + phosphate + H(+). Functionally, part of the ABC transporter complex MetNIQ involved in methionine import. Responsible for energy coupling to the transport system. The polypeptide is Methionine import ATP-binding protein MetN (Leifsonia xyli subsp. xyli (strain CTCB07)).